The sequence spans 196 residues: Probable malonic semialdehyde reductase RutE (196 aa).

This sequence belongs to the nitroreductase family. HadB/RutE subfamily. FMN serves as cofactor.

The catalysed reaction is 3-hydroxypropanoate + NADP(+) = 3-oxopropanoate + NADPH + H(+). May reduce toxic product malonic semialdehyde to 3-hydroxypropionic acid, which is excreted. This Escherichia coli (strain SMS-3-5 / SECEC) protein is Probable malonic semialdehyde reductase RutE.